The chain runs to 195 residues: Large ribosomal subunit protein eL6 (195 aa).

Phosphoserine occurs at positions 105 and 115.

It belongs to the eukaryotic ribosomal protein eL6 family. In terms of assembly, component of the large ribosomal subunit (LSU). Mature yeast ribosomes consist of a small (40S) and a large (60S) subunit. The 40S small subunit contains 1 molecule of ribosomal RNA (18S rRNA) and at least 33 different proteins. The large 60S subunit contains 3 rRNA molecules (25S, 5.8S and 5S rRNA) and at least 46 different proteins.

The protein resides in the cytoplasm. The protein localises to the nucleus. It is found in the nucleolus. Component of the ribosome, a large ribonucleoprotein complex responsible for the synthesis of proteins in the cell. The small ribosomal subunit (SSU) binds messenger RNAs (mRNAs) and translates the encoded message by selecting cognate aminoacyl-transfer RNA (tRNA) molecules. The large subunit (LSU) contains the ribosomal catalytic site termed the peptidyl transferase center (PTC), which catalyzes the formation of peptide bonds, thereby polymerizing the amino acids delivered by tRNAs into a polypeptide chain. The nascent polypeptides leave the ribosome through a tunnel in the LSU and interact with protein factors that function in enzymatic processing, targeting, and the membrane insertion of nascent chains at the exit of the ribosomal tunnel. The polypeptide is Large ribosomal subunit protein eL6 (rpl6) (Schizosaccharomyces pombe (strain 972 / ATCC 24843) (Fission yeast)).